An 873-amino-acid chain; its full sequence is DNA mismatch repair protein MutS (873 aa).

625-632 (GPNMGGKS) contacts ATP.

It belongs to the DNA mismatch repair MutS family.

Its function is as follows. This protein is involved in the repair of mismatches in DNA. It is possible that it carries out the mismatch recognition step. This protein has a weak ATPase activity. The protein is DNA mismatch repair protein MutS of Xanthomonas euvesicatoria pv. vesicatoria (strain 85-10) (Xanthomonas campestris pv. vesicatoria).